Reading from the N-terminus, the 201-residue chain is 5'(3')-deoxyribonucleotidase, cytosolic type (201 aa).

Aspartate 10 (nucleophile) is an active-site residue. Mg(2+) contacts are provided by aspartate 10 and aspartate 12. Aspartate 12 acts as the Proton donor in catalysis. 5 residues coordinate substrate: phenylalanine 18, phenylalanine 44, tyrosine 65, threonine 99, and lysine 134. Aspartate 145 is a Mg(2+) binding site. Residue serine 182 is modified to Phosphoserine.

This sequence belongs to the 5'(3')-deoxyribonucleotidase family. In terms of assembly, homodimer. Mg(2+) is required as a cofactor. Detected in skeletal muscle, heart and pancreas.

It localises to the cytoplasm. Its function is as follows. Dephosphorylates the 5' and 2'(3')-phosphates of deoxyribonucleotides, with a preference for dUMP and dTMP, intermediate activity towards dGMP, and low activity towards dCMP and dAMP. In Homo sapiens (Human), this protein is 5'(3')-deoxyribonucleotidase, cytosolic type (NT5C).